The following is a 296-amino-acid chain: Ribosomal protein L11 methyltransferase (296 aa).

S-adenosyl-L-methionine is bound by residues Thr151, Gly172, Asp194, and Asn233.

This sequence belongs to the methyltransferase superfamily. PrmA family.

Its subcellular location is the cytoplasm. The catalysed reaction is L-lysyl-[protein] + 3 S-adenosyl-L-methionine = N(6),N(6),N(6)-trimethyl-L-lysyl-[protein] + 3 S-adenosyl-L-homocysteine + 3 H(+). In terms of biological role, methylates ribosomal protein L11. The chain is Ribosomal protein L11 methyltransferase from Thiobacillus denitrificans (strain ATCC 25259 / T1).